Consider the following 271-residue polypeptide: Imidazole glycerol phosphate synthase subunit HisF (271 aa).

Active-site residues include D12 and D136.

The protein belongs to the HisA/HisF family. Heterodimer of HisH and HisF.

The protein localises to the cytoplasm. It carries out the reaction 5-[(5-phospho-1-deoxy-D-ribulos-1-ylimino)methylamino]-1-(5-phospho-beta-D-ribosyl)imidazole-4-carboxamide + L-glutamine = D-erythro-1-(imidazol-4-yl)glycerol 3-phosphate + 5-amino-1-(5-phospho-beta-D-ribosyl)imidazole-4-carboxamide + L-glutamate + H(+). The protein operates within amino-acid biosynthesis; L-histidine biosynthesis; L-histidine from 5-phospho-alpha-D-ribose 1-diphosphate: step 5/9. Functionally, IGPS catalyzes the conversion of PRFAR and glutamine to IGP, AICAR and glutamate. The HisF subunit catalyzes the cyclization activity that produces IGP and AICAR from PRFAR using the ammonia provided by the HisH subunit. In Haloarcula marismortui (strain ATCC 43049 / DSM 3752 / JCM 8966 / VKM B-1809) (Halobacterium marismortui), this protein is Imidazole glycerol phosphate synthase subunit HisF.